A 384-amino-acid chain; its full sequence is Dual specificity protein phosphatase 5 (384 aa).

Residues 19–141 (AEARCVVLDC…FYSQYPECCV (123 aa)) form the Rhodanese domain. Residues 53 to 74 (RRARGGAVSARYVLADEAARAR) carry the Nuclear localization signal motif. Residues 178–319 (GPVEILPFLY…LLQYESEILP (142 aa)) form the Tyrosine-protein phosphatase domain. The Phosphocysteine intermediate role is filled by C263.

This sequence belongs to the protein-tyrosine phosphatase family. Non-receptor class dual specificity subfamily.

The protein localises to the nucleus. The catalysed reaction is O-phospho-L-tyrosyl-[protein] + H2O = L-tyrosyl-[protein] + phosphate. It carries out the reaction O-phospho-L-seryl-[protein] + H2O = L-seryl-[protein] + phosphate. It catalyses the reaction O-phospho-L-threonyl-[protein] + H2O = L-threonyl-[protein] + phosphate. Dual specificity protein phosphatase; active with phosphotyrosine, phosphoserine and phosphothreonine residues. The highest relative activity is toward ERK1. This chain is Dual specificity protein phosphatase 5 (Dusp5), found in Rattus norvegicus (Rat).